Here is a 618-residue protein sequence, read N- to C-terminus: 1-aminocyclopropane-1-carboxylate synthase-like protein 1 (618 aa).

The segment covering 11–26 has biased composition (low complexity); it reads QGTQTPAAQTTCAPST. The interval 11 to 54 is disordered; that stretch reads QGTQTPAAQTTCAPSTMSSSSRPPLETLQAQSVSADETPGSALP. The span at 27-45 shows a compositional bias: polar residues; that stretch reads MSSSSRPPLETLQAQSVSA. Residue Glu122 participates in substrate binding. Lys340 is modified (N6-(pyridoxal phosphate)lysine).

Belongs to the class-I pyridoxal-phosphate-dependent aminotransferase family.

The polypeptide is 1-aminocyclopropane-1-carboxylate synthase-like protein 1 (accs) (Takifugu rubripes (Japanese pufferfish)).